The chain runs to 362 residues: F-box protein At2g14710 (362 aa).

An F-box domain is found at 1-47 (MAHLKNLPWELIEEILSRVPPKSLVRFRTVSKQWNALFDDKTFINNH).

The polypeptide is F-box protein At2g14710 (Arabidopsis thaliana (Mouse-ear cress)).